A 219-amino-acid polypeptide reads, in one-letter code: GPI ethanolamine phosphate transferase, stabilizing subunit (219 aa).

The next 6 helical transmembrane spans lie at 11–31 (YTNL…SFFV), 42–62 (TWLC…YLVV), 86–106 (CFLM…APLI), 113–133 (FLFA…LLGP), 155–175 (LQIT…PIPL), and 189–209 (TLGA…WIYW).

The protein belongs to the PIGF family. As to quaternary structure, part of the ethanolamine phosphate transferase 3 complex composed by PIGO and PIGF. Part of the ethanolamine phosphate transferase 2 complex with PIGG. PIGF is required to stabilize PIGG and PIGO.

The protein resides in the endoplasmic reticulum membrane. Its pathway is glycolipid biosynthesis; glycosylphosphatidylinositol-anchor biosynthesis. In terms of biological role, stabilizing subunit of the ethanolamine phosphate transferase 3 and ethanolamine phosphate transferase 2 complexes that sequentially transfer an ethanolamine phosphate (EtNP) from a phosphatidylethanolamine (PE) to the 6-OH position of the third alpha-1,2-linked mannose and the second alpha-1,6-linked mannose of the alpha-D-Man-(1-&gt;2)-alpha-D-Man-(1-&gt;6)-2-PEtn-alpha-D-Man-(1-&gt;4)-alpha-D-GlcN-(1-&gt;6)-(1-radyl,2-acyl-sn-glycero-3-phospho)-2-acyl-inositol (also termed H6) intermediate to generate a 6-PEtn-alpha-D-Man-(1-&gt;2)-6-PEtn-alpha-D-Man-(1-&gt;6)-2-PEtn-alpha-D-Man-(1-&gt;4)-alpha-D-GlcN-(1-&gt;6)-(1-radyl,2-acyl-sn-glycero-3-phospho)-2-acyl-inositol (also termed H8). Participates in the tenth and eleventh steps of the glycosylphosphatidylinositol-anchor biosynthesis, in association with PIGO and PIGG, respectively. The chain is GPI ethanolamine phosphate transferase, stabilizing subunit from Mus musculus (Mouse).